The primary structure comprises 139 residues: Holo-[acyl-carrier-protein] synthase (139 aa).

Asp-8 and Glu-61 together coordinate Mg(2+).

Belongs to the P-Pant transferase superfamily. AcpS family. It depends on Mg(2+) as a cofactor.

It localises to the cytoplasm. The catalysed reaction is apo-[ACP] + CoA = holo-[ACP] + adenosine 3',5'-bisphosphate + H(+). Its function is as follows. Transfers the 4'-phosphopantetheine moiety from coenzyme A to a Ser of acyl-carrier-protein. In Bradyrhizobium sp. (strain BTAi1 / ATCC BAA-1182), this protein is Holo-[acyl-carrier-protein] synthase.